The primary structure comprises 683 residues: Cyclic nucleotide-gated channel alpha-1 (683 aa).

The Cytoplasmic portion of the chain corresponds to 1–160 (MKTNIINTWH…PSGNMYYNWL (160 aa)). A disordered region spans residues 34–144 (ACSSFSDNDN…PKEKKEEEKK (111 aa)). Over residues 105–144 (SKADDKKESKKDPEKKKKKEKEKEKKKEEKPKEKKEEEKK) the composition is skewed to basic and acidic residues. Residues 161–182 (FCITLPVMYNWTMIIARACFDE) form a helical membrane-spanning segment. Residues 183-192 (LQSDYLEYWL) are Extracellular-facing. The helical transmembrane segment at 193–213 (IFDYVSDVVYLADMFVRTRTG) threads the bilayer. Topologically, residues 214–238 (YLEQGLLVKDELKLIEKYKANLQFK) are cytoplasmic. Residues 239-257 (LDVLSVIPTDLLYFKFGWN) traverse the membrane as a helical segment. The Extracellular portion of the chain corresponds to 258-262 (YPEIR). Residues 263–281 (LNRLLRISRMFEFFQRTET) traverse the membrane as a helical segment. Over 282–288 (RTNYPNI) the chain is Cytoplasmic. Residues 286–394 (PNIFRISNLV…GNIGSMISNM (109 aa)) are ion conduction pathway. Residues 289 to 312 (FRISNLVMYIVIIIHWNACVYYSI) form a helical membrane-spanning segment. Over 313 to 335 (SKAIGFGNDTWVYPDVNDPEFGR) the chain is Extracellular. Residue Asn-320 is glycosylated (N-linked (GlcNAc...) asparagine). Helical transmembrane passes span 336–370 (LARK…VFVV) and 371–395 (VDFL…SNMN). A selectivity filter region spans residues 353–356 (TIGE). The C-linker stretch occupies residues 396 to 472 (AARAEFQSRV…DTLKKVRIFA (77 aa)). Topologically, residues 396–683 (AARAEFQSRV…ESEPTESLQG (288 aa)) are cytoplasmic. Residues 476 to 596 (AGLLVELVLK…EEKGRQILMK (121 aa)) form a cyclic nucleotide-binding domain region. 3',5'-cyclic GMP-binding residues include Gly-536, Ser-539, Arg-552, and Thr-553. Arg-552 and Thr-553 together coordinate 3',5'-cyclic AMP. Positions 614–668 (LEEKVTRMEGSVDLLQTRFARILAEYESMQQKLKQRLTKVEKFLKPLIETEFSAL) form a coiled coil.

This sequence belongs to the cyclic nucleotide-gated cation channel (TC 1.A.1.5) family. CNGA1 subfamily. In terms of assembly, forms heterotetrameric channels composed of CNGA1 and CNGB1 subunits with 3:1 stoichiometry. May also form cyclic nucleotide-activated homotetrameric channels, that are efficiently activated by saturating cGMP, but poorly activated by saturating cAMP compared to the heterotetramer with CNGB1. The channel binds Ca(2+)-bound CALM1 via CaM1 and CaM2 regions of the CNGB1 subunit; this interaction modulates the affinity of the channel for cNMPs in response to intracellular Ca(2+) levels. Rod cells in the retina.

Its subcellular location is the cell membrane. The catalysed reaction is Ca(2+)(in) = Ca(2+)(out). The enzyme catalyses Na(+)(in) = Na(+)(out). It catalyses the reaction K(+)(in) = K(+)(out). It carries out the reaction NH4(+)(in) = NH4(+)(out). The catalysed reaction is Rb(+)(in) = Rb(+)(out). The enzyme catalyses Li(+)(in) = Li(+)(out). It catalyses the reaction Cs(+)(in) = Cs(+)(out). In terms of biological role, pore-forming subunit of the rod cyclic nucleotide-gated channel. Mediates rod photoresponses at dim light converting transient changes in intracellular cGMP levels into electrical signals. In the dark, cGMP levels are high and keep the channel open enabling a steady inward current carried by Na(+) and Ca(2+) ions that leads to membrane depolarization and neurotransmitter release from synaptic terminals. Upon photon absorption cGMP levels decline leading to channel closure and membrane hyperpolarization that ultimately slows neurotransmitter release and signals the presence of light, the end point of the phototransduction cascade. Conducts cGMP- and cAMP-gated ion currents, with permeability for monovalent and divalent cations. The selectivity for Ca(2+) over Na(+) increases with cGMP concentrations, whereas the selectivity among monovalent ions is independent of the cGMP levels. The sequence is that of Cyclic nucleotide-gated channel alpha-1 from Rattus norvegicus (Rat).